The following is a 469-amino-acid chain: 3-isopropylmalate dehydratase large subunit (469 aa).

The [4Fe-4S] cluster site is built by Cys-349, Cys-410, and Cys-413.

Belongs to the aconitase/IPM isomerase family. LeuC type 1 subfamily. Heterodimer of LeuC and LeuD. It depends on [4Fe-4S] cluster as a cofactor.

The catalysed reaction is (2R,3S)-3-isopropylmalate = (2S)-2-isopropylmalate. It functions in the pathway amino-acid biosynthesis; L-leucine biosynthesis; L-leucine from 3-methyl-2-oxobutanoate: step 2/4. Its function is as follows. Catalyzes the isomerization between 2-isopropylmalate and 3-isopropylmalate, via the formation of 2-isopropylmaleate. In Neisseria meningitidis serogroup B (strain ATCC BAA-335 / MC58), this protein is 3-isopropylmalate dehydratase large subunit.